Consider the following 291-residue polypeptide: 4-diphosphocytidyl-2-C-methyl-D-erythritol kinase (291 aa).

Residue lysine 12 is part of the active site. Position 95 to 105 (95 to 105) interacts with ATP; that stretch reads PDGGGLGGGSS. The active site involves aspartate 137.

Belongs to the GHMP kinase family. IspE subfamily.

The catalysed reaction is 4-CDP-2-C-methyl-D-erythritol + ATP = 4-CDP-2-C-methyl-D-erythritol 2-phosphate + ADP + H(+). The protein operates within isoprenoid biosynthesis; isopentenyl diphosphate biosynthesis via DXP pathway; isopentenyl diphosphate from 1-deoxy-D-xylulose 5-phosphate: step 3/6. Its function is as follows. Catalyzes the phosphorylation of the position 2 hydroxy group of 4-diphosphocytidyl-2C-methyl-D-erythritol. The sequence is that of 4-diphosphocytidyl-2-C-methyl-D-erythritol kinase from Alkalilimnicola ehrlichii (strain ATCC BAA-1101 / DSM 17681 / MLHE-1).